Here is a 262-residue protein sequence, read N- to C-terminus: Virulence plasmid protein pGP6-D-related protein (262 aa).

This sequence belongs to the UPF0137 (pGP6-D) family.

This Chlamydia muridarum (strain MoPn / Nigg) protein is Virulence plasmid protein pGP6-D-related protein.